Reading from the N-terminus, the 561-residue chain is Acyl-CoA ligase frbB (561 aa).

Residues 213–221 (TSGTSGAQK), 354–359 (PGWGLT), D437, R456, and K551 contribute to the ATP site. An SBD1 region spans residues 284–354 (DLKRVLGSIA…TLRPKWHLQP (71 aa)). The interval 355 to 417 (GWGLTEGGGA…MKSPSVIAGY (63 aa)) is SBD2.

The protein belongs to the ATP-dependent AMP-binding enzyme family.

The protein operates within antifungal biosynthesis. Functionally, acyl-CoA ligase; part of the gene cluster that mediates the biosynthesis of the antifungal antibiotic FR901469, an inhibitor of beta-1,3-glucansynthase, exerting antifungal activity against the pathogenes Candida albicans and Aspergillus fumigatus. FR901469 is a cyclic depsipeptide containing 12 amino acid residues and a fatty acid chain. The NRPS frbI contains 12 modules responsible for the formation of the depsipeptide backbone which is denoted as Acyl-Thr-Ala-Tyr-Val-4OHPro-Thr-Thr-3OHPro-threo3OHGln-Gly-Thr-Orn-OH (C71H116N14O23). The PKS frbB is probably involved in the production of the hydrocarbon chain, and the acyl-CoA ligase frbC might be involved in the transport of the chain to the peptide ptoduct of frbI. Because FR901469 contains 3 hydroxylated amino acid residues, the 3 oxygenases frbA, frbH, and frbJ might be participating in amino acid hydroxylation. As no thioesterase domains were detected in frbI or frbB, the thioesterases frbD and frbE may instead release and cyclize the products of the NRPS and PKS, respectively. The polypeptide is Acyl-CoA ligase frbB (Dothideomycetidae sp. (strain 11243) (Fungal sp. (strain No.11243))).